A 463-amino-acid polypeptide reads, in one-letter code: MHLHFTPRQIVEKLDQYIIGQKDAKKAVAVALRNRYRRSKLAENLRDEIAPKNILMIGPTGVGKTEVARRMAKLVGAPFIKVEATKFTEVGYVGRDVESMVRDLVETSVRIVKEEMVVKVQDKAEEQANQRLVEILVPSPEKQSGFKNPLEMLFGGAQNSSQTSDTQEDGEIEKKRQDVERKLAAGLLEDEIVSIEVTEQQSSMFDMLQGTGMEQMGMNFQDALGSFMPKKTKKRKLSVKEARKLLTNEEAQRLIDMDEVTQEAVYRAEQLGIIFIDEIDKIAGKQSNSVDVSREGVQRDILPIVEGSNVATKYGSVKTDYILFVAAGAFHMSKPSDLIPELQGRFPIRVELTKLSTDDFVKILIEPDNALIKQYMALLATEGIEIEFSDEAIRKIAEIAYQVNQDTDNIGARRLHTIMEKLLEDLSFEASEITLEKITITPQYVEEKLASIAKNKDVSQFIL.

Residues isoleucine 19 and 61-66 (GVGKTE) each bind ATP. A disordered region spans residues 154–174 (FGGAQNSSQTSDTQEDGEIEK). ATP-binding residues include aspartate 277, glutamate 341, and arginine 413.

The protein belongs to the ClpX chaperone family. HslU subfamily. In terms of assembly, a double ring-shaped homohexamer of HslV is capped on each side by a ring-shaped HslU homohexamer. The assembly of the HslU/HslV complex is dependent on binding of ATP.

The protein resides in the cytoplasm. Functionally, ATPase subunit of a proteasome-like degradation complex; this subunit has chaperone activity. The binding of ATP and its subsequent hydrolysis by HslU are essential for unfolding of protein substrates subsequently hydrolyzed by HslV. HslU recognizes the N-terminal part of its protein substrates and unfolds these before they are guided to HslV for hydrolysis. This chain is ATP-dependent protease ATPase subunit HslU, found in Bacillus cereus (strain G9842).